A 192-amino-acid chain; its full sequence is Vascular endothelial growth factor A (192 aa).

Positions 1–26 are cleaved as a signal peptide; the sequence is MNFLLSWIHWGLAALLYFHNAKVLQA. 3 disulfide bridges follow: cysteine 52/cysteine 94, cysteine 83/cysteine 128, and cysteine 87/cysteine 130. Asparagine 101 carries N-linked (GlcNAc...) asparagine glycosylation.

The protein belongs to the PDGF/VEGF growth factor family. In terms of assembly, homodimer; disulfide-linked. Also found as heterodimer with PGF Interacts with FLT1/VEGFR1 and KDR/VEGFR2 receptors, heparan sulfate and heparin. In terms of tissue distribution, expressed by the venom gland, and probably other tissues.

It localises to the secreted. Functionally, growth factor active in angiogenesis, vasculogenesis and endothelial cell growth. Induces endothelial cell proliferation, promotes cell migration, inhibits apoptosis and induces permeabilization of blood vessels. In Vipera ammodytes ammodytes (Western sand viper), this protein is Vascular endothelial growth factor A.